Consider the following 503-residue polypeptide: Arabinose import ATP-binding protein AraG 1 (503 aa).

2 consecutive ABC transporter domains span residues 5-240 (LRFD…MVGR) and 251-497 (RALG…LPQT). 37 to 44 (GENGAGKS) lines the ATP pocket.

Belongs to the ABC transporter superfamily. Arabinose importer (TC 3.A.1.2.2) family. In terms of assembly, the complex is composed of two ATP-binding proteins (AraG), two transmembrane proteins (AraH) and a solute-binding protein (AraF).

The protein resides in the cell inner membrane. The catalysed reaction is L-arabinose(out) + ATP + H2O = L-arabinose(in) + ADP + phosphate + H(+). In terms of biological role, part of the ABC transporter complex AraFGH involved in arabinose import. Responsible for energy coupling to the transport system. The polypeptide is Arabinose import ATP-binding protein AraG 1 (Burkholderia ambifaria (strain ATCC BAA-244 / DSM 16087 / CCUG 44356 / LMG 19182 / AMMD) (Burkholderia cepacia (strain AMMD))).